Reading from the N-terminus, the 648-residue chain is Biosynthetic arginine decarboxylase (648 aa).

Lysine 109 carries the post-translational modification N6-(pyridoxal phosphate)lysine. Substrate is bound at residue 291–301; sequence IDVGGGLGIDF.

This sequence belongs to the Orn/Lys/Arg decarboxylase class-II family. SpeA subfamily. Mg(2+) is required as a cofactor. It depends on pyridoxal 5'-phosphate as a cofactor.

It catalyses the reaction L-arginine + H(+) = agmatine + CO2. It participates in amine and polyamine biosynthesis; agmatine biosynthesis; agmatine from L-arginine: step 1/1. Functionally, catalyzes the biosynthesis of agmatine from arginine. The protein is Biosynthetic arginine decarboxylase of Prochlorococcus marinus (strain MIT 9215).